Here is a 6631-residue protein sequence, read N- to C-terminus: Replicase polyprotein 1ab (6631 aa).

Residues methionine 1–lysine 1752 are Cytoplasmic-facing. Ubiquitin-like domains follow at residues lysine 675–glutamate 780 and cysteine 1177–isoleucine 1229. The Macro domain occupies valine 1005–threonine 1181. Residues glutamate 1238–asparagine 1499 enclose the Peptidase C16 domain. The For PL-PRO activity role is filled by cysteine 1276. The C4-type; degenerate zinc finger occupies cysteine 1355 to cysteine 1392. Active-site for PL-PRO activity residues include histidine 1439 and aspartate 1450. The helical transmembrane segment at valine 1753–threonine 1773 threads the bilayer. The HD1 stretch occupies residues valine 1753–cysteine 1866. The 3Ecto domain occupies valine 1771–aspartate 1835. Residues glycine 1774–asparagine 1845 are Lumenal-facing. Intrachain disulfides connect cysteine 1787-cysteine 1813 and cysteine 1804-cysteine 1810. The chain crosses the membrane as a helical span at residues tryptophan 1846–cysteine 1866. The Cytoplasmic segment spans residues tyrosine 1867–lysine 2282. Positions tyrosine 1913–alanine 2003 are Y1. One can recognise a CoV Nsp3 Y domain in the interval tyrosine 1913–lysine 2265. Residues histidine 1917, cysteine 1922, cysteine 1927, cysteine 1930, cysteine 1963, histidine 1966, cysteine 1970, and cysteine 1973 each contribute to the Zn(2+) site. Positions histidine 1917–cysteine 1930 are ZF1. Positions cysteine 1963–cysteine 1973 are ZF2. The interval tyrosine 2004–leucine 2106 is Y2. A coV-Y region spans residues tyrosine 2004 to lysine 2265. The Y3 stretch occupies residues isoleucine 2107–glutamate 2165. The segment at valine 2166–lysine 2265 is Y4. Residues tryptophan 2283–methionine 2303 form a helical membrane-spanning segment. Positions tryptophan 2283–leucine 2666 are HD2. Topologically, residues asparagine 2304 to tyrosine 2561 are lumenal. A helical membrane pass occupies residues isoleucine 2562–isoleucine 2582. Topologically, residues lysine 2583–serine 2613 are cytoplasmic. A helical membrane pass occupies residues tyrosine 2614–serine 2634. Topologically, residues arginine 2635–leucine 2645 are lumenal. The chain crosses the membrane as a helical span at residues valine 2646 to leucine 2666. Residues tyrosine 2667–tryptophan 3098 lie on the Cytoplasmic side of the membrane. The Nsp4C domain maps to leucine 2686–glutamine 2781. The region spanning alanine 2782–glutamine 3088 is the Peptidase C30 domain. Active-site for 3CL-PRO activity residues include histidine 2822 and cysteine 2924. Residues phenylalanine 3099–threonine 3119 traverse the membrane as a helical segment. The tract at residues phenylalanine 3099–tyrosine 3319 is HD3. Residues alanine 3120–leucine 3123 lie on the Lumenal side of the membrane. The helical transmembrane segment at lysine 3124–valine 3144 threads the bilayer. At lysine 3145–threonine 3153 the chain is on the cytoplasmic side. The helical transmembrane segment at phenylalanine 3154–tyrosine 3174 threads the bilayer. Over asparagine 3175–aspartate 3190 the chain is Lumenal. Residues proline 3191–phenylalanine 3211 traverse the membrane as a helical segment. At lysine 3212–glutamate 3259 the chain is on the cytoplasmic side. A helical transmembrane segment spans residues leucine 3260–phenylalanine 3280. The Lumenal segment spans residues lysine 3281 to tyrosine 3298. The helical transmembrane segment at valine 3299 to tyrosine 3319 threads the bilayer. Residues tryptophan 3320–methionine 6631 lie on the Cytoplasmic side of the membrane. One can recognise a RdRp Nsp7 cofactor domain in the interval serine 3382–glutamine 3464. A RdRp Nsp8 cofactor domain is found at serine 3465–glutamine 3674. Residues asparagine 3675 to glutamine 3785 enclose the Nsp9 ssRNA-binding domain. Positions lysine 3787–serine 3928 constitute an ExoN/MTase coactivator domain. 8 residues coordinate Zn(2+): cysteine 3860, cysteine 3863, histidine 3869, cysteine 3880, cysteine 3906, cysteine 3909, cysteine 3917, and cysteine 3919. 2 zinc fingers span residues cysteine 3860 to cysteine 3880 and cysteine 3906 to cysteine 3919. Residues tyrosine 3942 to valine 4200 form the NiRAN domain. One can recognise a Nsp12 Interface domain in the interval lysine 4205–serine 4303. 5 residues coordinate Zn(2+): histidine 4234, cysteine 4240, cysteine 4245, cysteine 4249, and cysteine 4426. Positions lysine 4304–glutamine 4870 constitute a Nsp12 RNA-dependent RNA polymerase domain. A rdRp Fingers N-ter region spans residues glycine 4306–asparagine 4519. Residues threonine 4520 to proline 4558 are rdRp Palm N-ter. The region spanning proline 4550–glycine 4712 is the RdRp catalytic domain. The segment at lysine 4559–glycine 4617 is rdRp Fingers C-ter. 3 residues coordinate Zn(2+): histidine 4580, cysteine 4583, and cysteine 4584. Residues threonine 4618–glutamine 4753 form a rdRp Palm C-ter region. Residues serine 4697, aspartate 4698, and aspartate 4699 contribute to the active site. Residues histidine 4754–glutamine 4870 are rdRp Thumb. Residues serine 4871 to asparagine 4983 enclose the CV ZBD domain. Zn(2+) is bound by residues cysteine 4875, cysteine 4878, cysteine 4886, cysteine 4889, cysteine 4896, cysteine 4899, histidine 4903, histidine 4909, cysteine 4920, cysteine 4925, cysteine 4942, and histidine 4945. The (+)RNA virus helicase ATP-binding domain occupies methionine 5127–leucine 5307. Glycine 5152–serine 5159 contacts ATP. The 172-residue stretch at alanine 5308–asparagine 5479 folds into the (+)RNA virus helicase C-terminal domain. Positions methionine 5541–cysteine 5755 constitute an ExoN domain. Catalysis depends on residues aspartate 5559, glutamate 5561, and glutamate 5660. The Zn(2+) site is built by cysteine 5676, cysteine 5678, cysteine 5694, histidine 5697, histidine 5725, cysteine 5729, and histidine 5732. Residues histidine 5736 and aspartate 5741 contribute to the active site. Position 5747 (cysteine 5747) interacts with Zn(2+). The 228-residue stretch at tyrosine 5764 to glutamine 5991 folds into the N7-MTase domain. Aspartate 5799–glycine 5805 is an S-adenosyl-L-methionine binding site. The interval cysteine 5879–threonine 5893 is gpppA-binding. 4 residues coordinate Zn(2+): cysteine 5917, cysteine 5937, cysteine 5948, and histidine 5951. A Nsp15 N-terminal oligomerization domain is found at serine 5992–arginine 6052. Residues asparagine 6053–valine 6168 enclose the AV-Nsp11N/CoV-Nsp15M domain. The 142-residue stretch at glutamate 6185–proline 6326 folds into the NendoU domain. Residues histidine 6214, histidine 6229, lysine 6269, lysine 6373, aspartate 6457, lysine 6501, and glutamate 6534 contribute to the active site. Positions glutamine 6329–valine 6628 constitute a Nidovirus-type SAM-dependent 2'-O-MTase domain.

This sequence belongs to the coronaviruses polyprotein 1ab family. As to quaternary structure, interacts with host PHB and PHB2. In terms of assembly, interacts with papain-like protease and non-structural protein 6. Monomer. Homodimer. Only the homodimer shows catalytic activity. As to quaternary structure, eight copies of nsp7 and eight copies of nsp8 assemble to form a heterohexadecamer dsRNA-encircling ring structure. In terms of assembly, eight copies of nsp7 and eight copies of nsp8 assemble to form a heterohexadecamer dsRNA-encircling ring structure. Interacts with ORF6 protein. Homodimer. As to quaternary structure, homododecamer. Interacts with proofreading exoribonuclease nsp14 and 2'-O-methyltransferase nsp16; these interactions enhance nsp14 and nsp16 enzymatic activities. In terms of assembly, interacts with host DDX1 (via C-terminus). Interacts with non-structural protein 10. Homohexamer. As to quaternary structure, interacts with non-structural protein 10. It depends on Mn(2+) as a cofactor. The cofactor is Zn(2+). In terms of processing, specific enzymatic cleavages in vivo by its own proteases yield mature proteins. 3C-like proteinase nsp5 liberates nsps 6-16 from the polyprotein. Papain-like and 3C-like proteinases are autocatalytically processed. N-glycosylated.

The protein resides in the host endoplasmic reticulum membrane. It is found in the host cytoplasm. It localises to the host perinuclear region. The protein localises to the host endoplasmic reticulum. Its subcellular location is the host endoplasmic reticulum-Golgi intermediate compartment. The enzyme catalyses Thiol-dependent hydrolysis of ester, thioester, amide, peptide and isopeptide bonds formed by the C-terminal Gly of ubiquitin (a 76-residue protein attached to proteins as an intracellular targeting signal).. It carries out the reaction RNA(n) + a ribonucleoside 5'-triphosphate = RNA(n+1) + diphosphate. The catalysed reaction is ATP + H2O = ADP + phosphate + H(+). It catalyses the reaction a 5'-end diphospho-ribonucleoside in mRNA + GTP + H(+) = a 5'-end (5'-triphosphoguanosine)-ribonucleoside in mRNA + diphosphate. The enzyme catalyses uridylyl-uridylyl-ribonucleotide-RNA = a 3'-end uridylyl-2',3'-cyclophospho-uridine-RNA + a 5'-end dephospho-ribonucleoside-RNA. It carries out the reaction a 5'-end (N(7)-methyl 5'-triphosphoguanosine)-ribonucleoside in mRNA + S-adenosyl-L-methionine = a 5'-end (N(7)-methyl 5'-triphosphoguanosine)-(2'-O-methyl-ribonucleoside) in mRNA + S-adenosyl-L-homocysteine + H(+). Its function is as follows. Multifunctional protein involved in the transcription and replication of viral RNAs. Contains the proteinases responsible for the cleavages of the polyprotein. May play a role in the modulation of host cell survival signaling pathway by interacting with host PHB and PHB2. Indeed, these two proteins play a role in maintaining the functional integrity of the mitochondria and protecting cells from various stresses. Functionally, responsible for the cleavages located at the N-terminus of the replicase polyprotein. In addition, PL-PRO possesses a deubiquitinating/deISGylating activity and processes both 'Lys-48'- and 'Lys-63'-linked polyubiquitin chains from cellular substrates. In terms of biological role, plays a role in host membrane rearrangement that leads to creation of cytoplasmic double-membrane vesicles (DMV) necessary for viral replication. Alone is able to induce paired membranes. Coexpression of nsp3 and nsp4 does not result in the formation of DMVs. Its function is as follows. Responsible for the majority of cleavages as it cleaves the C-terminus of replicase polyprotein at 11 sites. Recognizes substrates containing the core sequence [ILMVF]-Q-|-[SGACN]. Inhibited by the substrate-analog Cbz-Val-Asn-Ser-Thr-Leu-Gln-CMK. Forms a hexadecamer with nsp8 (8 subunits of each) that may participate in viral replication by acting as a primase. Alternatively, may synthesize substantially longer products than oligonucleotide primers. Functionally, forms a hexadecamer with nsp7 (8 subunits of each) that may participate in viral replication by acting as a primase. Alternatively, may synthesize substantially longer products than oligonucleotide primers. In terms of biological role, forms a primer, NSP9-pU, which is utilized by the polymerase for the initiation of RNA chains. Interacts with ribosome signal recognition particle RNA (SRP). Together with NSP8, suppress protein integration into the cell membrane, thereby disrupting host immune defenses. Its function is as follows. Plays a pivotal role in viral transcription by stimulating both nsp14 3'-5' exoribonuclease and nsp16 2'-O-methyltransferase activities. Therefore plays an essential role in viral mRNAs cap methylation. RNA-directed RNA polymerase that catalyzes the transcription of viral genomic and subgenomic RNAs. Acts in complex with nsp7 and nsp8 to transcribe both the minus and positive strands of genomic RNA. The kinase-like NiRAN domain of NSP12 attaches one or more nucleotides to the amino terminus of NSP9, forming a covalent RNA-protein intermediate that serves as transcription/replication primer. Subgenomic RNAs (sgRNAs) are formed by discontinuous transcription: The polymerase has the ability to pause at transcription-regulating sequences (TRS) and jump to the leader TRS, resulting in a major deletion. This creates a series of subgenomic RNAs that are replicated, transcribed and translated. In addition, Nsp12 is a subunit of the viral RNA capping enzyme that catalyzes the RNA guanylyltransferase reaction for genomic and sub-genomic RNAs. Subsequently, the NiRAN domain transfers RNA to GDP, and forms the core cap structure GpppA-RNA. Functionally, multi-functional protein with a zinc-binding domain in N-terminus displaying RNA and DNA duplex-unwinding activities with 5' to 3' polarity. Activity of helicase is dependent on magnesium. In terms of biological role, enzyme possessing two different activities: an exoribonuclease activity acting on both ssRNA and dsRNA in a 3' to 5' direction and a N7-guanine methyltransferase activity. Acts as a proofreading exoribonuclease for RNA replication, thereby lowering The sensitivity of the virus to RNA mutagens. Its function is as follows. Plays a role in viral transcription/replication and prevents the simultaneous activation of host cell dsRNA sensors, such as MDA5/IFIH1, OAS, and PKR. Acts by degrading the 5'-polyuridines generated during replication of the poly(A) region of viral genomic and subgenomic RNAs. Catalyzes a two-step reaction in which a 2'3'-cyclic phosphate (2'3'-cP) is first generated by 2'-O transesterification, which is then hydrolyzed to a 3'-phosphate (3'-P). If not degraded, poly(U) RNA would hybridize with poly(A) RNA tails and activate host dsRNA sensors. Methyltransferase that mediates mRNA cap 2'-O-ribose methylation to the 5'-cap structure of viral mRNAs. N7-methyl guanosine cap is a prerequisite for binding of nsp16. Therefore plays an essential role in viral mRNAs cap methylation which is essential to evade immune system. The sequence is that of Replicase polyprotein 1ab (rep) from Gallus gallus (Chicken).